A 255-amino-acid chain; its full sequence is Imidazole glycerol phosphate synthase subunit HisF (255 aa).

Active-site residues include Asp12 and Asp131.

Belongs to the HisA/HisF family. As to quaternary structure, heterodimer of HisH and HisF.

It localises to the cytoplasm. It carries out the reaction 5-[(5-phospho-1-deoxy-D-ribulos-1-ylimino)methylamino]-1-(5-phospho-beta-D-ribosyl)imidazole-4-carboxamide + L-glutamine = D-erythro-1-(imidazol-4-yl)glycerol 3-phosphate + 5-amino-1-(5-phospho-beta-D-ribosyl)imidazole-4-carboxamide + L-glutamate + H(+). The protein operates within amino-acid biosynthesis; L-histidine biosynthesis; L-histidine from 5-phospho-alpha-D-ribose 1-diphosphate: step 5/9. Functionally, IGPS catalyzes the conversion of PRFAR and glutamine to IGP, AICAR and glutamate. The HisF subunit catalyzes the cyclization activity that produces IGP and AICAR from PRFAR using the ammonia provided by the HisH subunit. The polypeptide is Imidazole glycerol phosphate synthase subunit HisF (Neisseria meningitidis serogroup C (strain 053442)).